A 495-amino-acid chain; its full sequence is Lysine--tRNA ligase (495 aa).

E406 and E413 together coordinate Mg(2+).

This sequence belongs to the class-II aminoacyl-tRNA synthetase family. In terms of assembly, homodimer. Mg(2+) is required as a cofactor.

The protein resides in the cytoplasm. It catalyses the reaction tRNA(Lys) + L-lysine + ATP = L-lysyl-tRNA(Lys) + AMP + diphosphate. The protein is Lysine--tRNA ligase of Leptospira interrogans serogroup Icterohaemorrhagiae serovar copenhageni (strain Fiocruz L1-130).